A 392-amino-acid polypeptide reads, in one-letter code: Extracellular metalloproteinase 4 (392 aa).

A propeptide spanning residues 1–9 is cleaved from the precursor; the sequence is VHSVVDYVS. A glycan (N-linked (GlcNAc...) asparagine) is linked at Asn176. Residue His193 participates in Zn(2+) binding. Residue Glu194 is part of the active site. His197 contacts Zn(2+). Residues Asn359 and Asn385 are each glycosylated (N-linked (GlcNAc...) asparagine).

This sequence belongs to the peptidase M36 family. Requires Zn(2+) as cofactor.

It is found in the secreted. In terms of biological role, secreted metalloproteinase probably acting as a virulence factor. In Trichophyton soudanense, this protein is Extracellular metalloproteinase 4 (MEP4).